The chain runs to 605 residues: Indole-3-acetic acid-amido synthetase GH3.8 (605 aa).

Residues serine 115, 342–346, tyrosine 365, aspartate 421, and arginine 440 each bind AMP; that span reads MYASS.

It belongs to the IAA-amido conjugating enzyme family. Expressed in the inner floral organs (lodicules, stamens and carpels) and at lower levels in lemmas and paleas.

Catalyzes the synthesis of indole-3-acetic acid (IAA)-amino acid conjugates, providing a mechanism for the plant to cope with the presence of excessive free auxin. Produces more IAA-Asp levels than IAA-Ala levels in vitro. May participate in the activation of disease resistance by preventing the accumulation of free IAA, which reduces the expression of a group of auxin-responsive genes encoding expansins that control cell wall loosening and expansion. Contributes to late events in stamen and carpel differentiation, and influences floret fertility. The chain is Indole-3-acetic acid-amido synthetase GH3.8 (GH3.8) from Oryza sativa subsp. indica (Rice).